The primary structure comprises 180 residues: Acireductone dioxygenase (180 aa).

Residues His-97, His-99, Glu-103, and His-141 each contribute to the Fe(2+) site. 4 residues coordinate Ni(2+): His-97, His-99, Glu-103, and His-141.

The protein belongs to the acireductone dioxygenase (ARD) family. As to quaternary structure, monomer. Requires Fe(2+) as cofactor. Ni(2+) serves as cofactor.

The enzyme catalyses 1,2-dihydroxy-5-(methylsulfanyl)pent-1-en-3-one + O2 = 3-(methylsulfanyl)propanoate + CO + formate + 2 H(+). It carries out the reaction 1,2-dihydroxy-5-(methylsulfanyl)pent-1-en-3-one + O2 = 4-methylsulfanyl-2-oxobutanoate + formate + 2 H(+). Its pathway is amino-acid biosynthesis; L-methionine biosynthesis via salvage pathway; L-methionine from S-methyl-5-thio-alpha-D-ribose 1-phosphate: step 5/6. In terms of biological role, catalyzes 2 different reactions between oxygen and the acireductone 1,2-dihydroxy-3-keto-5-methylthiopentene (DHK-MTPene) depending upon the metal bound in the active site. Fe-containing acireductone dioxygenase (Fe-ARD) produces formate and 2-keto-4-methylthiobutyrate (KMTB), the alpha-ketoacid precursor of methionine in the methionine recycle pathway. Ni-containing acireductone dioxygenase (Ni-ARD) produces methylthiopropionate, carbon monoxide and formate, and does not lie on the methionine recycle pathway. This Yersinia enterocolitica serotype O:8 / biotype 1B (strain NCTC 13174 / 8081) protein is Acireductone dioxygenase.